The sequence spans 360 residues: Decorin (360 aa).

Residues 1–16 (MKATIIFLLVAQVSWA) form the signal peptide. Residues 17–30 (GPFQQKGLFDFMLE) constitute a propeptide that is removed on maturation. Serine 34 carries an O-linked (Xyl...) (glycosaminoglycan) serine glycan. 2 disulfide bridges follow: cysteine 55/cysteine 61 and cysteine 59/cysteine 68. 12 LRR repeats span residues 74–94 (EKVP…NNKI), 95–118 (TEIK…NNKI), 119–142 (SKIS…KNQL), 143–163 (KELP…ENEI), 164–187 (TKVR…TNPL), 188–213 (KSSG…DTNI), 214–234 (TTIP…GNKI), 235–258 (TKVD…FNSI), 259–282 (SAVD…NNKL), 283–305 (VKVP…NNNI), 306–335 (SAIG…SNPV), and 336–360 (QYWE…GNYK). Residue asparagine 212 is glycosylated (N-linked (GlcNAc...) asparagine). 2 N-linked (GlcNAc...) asparagine glycosylation sites follow: asparagine 263 and asparagine 304. A disulfide bond links cysteine 314 and cysteine 347.

It belongs to the small leucine-rich proteoglycan (SLRP) family. SLRP class I subfamily. In terms of assembly, binds to type I and type II collagen, fibronectin and TGF-beta. Forms a ternary complex with MFAP2 and ELN. Interacts with DPT. The attached glycosaminoglycan chain can be either chondroitin 4-sulfate, chondroitin 6-sulfate or dermatan sulfate, depending upon the tissue of origin.

The protein resides in the secreted. Its subcellular location is the extracellular space. It localises to the extracellular matrix. May affect the rate of fibrils formation. In Bos taurus (Bovine), this protein is Decorin (DCN).